Reading from the N-terminus, the 216-residue chain is Probable nicotinate-nucleotide adenylyltransferase (216 aa).

This sequence belongs to the NadD family.

The catalysed reaction is nicotinate beta-D-ribonucleotide + ATP + H(+) = deamido-NAD(+) + diphosphate. It functions in the pathway cofactor biosynthesis; NAD(+) biosynthesis; deamido-NAD(+) from nicotinate D-ribonucleotide: step 1/1. Its function is as follows. Catalyzes the reversible adenylation of nicotinate mononucleotide (NaMN) to nicotinic acid adenine dinucleotide (NaAD). The sequence is that of Probable nicotinate-nucleotide adenylyltransferase from Maridesulfovibrio salexigens (strain ATCC 14822 / DSM 2638 / NCIMB 8403 / VKM B-1763) (Desulfovibrio salexigens).